A 66-amino-acid chain; its full sequence is uncharacterized protein (66 aa).

The 55-residue stretch at 5-59 folds into the HTH cro/C1-type domain; the sequence is VKELRARFGYSQEKLGETVGVTRQTVAAIEKGDYVPSLLLALKICKAFSMKMEDV. The segment at residues 16–35 is a DNA-binding region (H-T-H motif); that stretch reads QEKLGETVGVTRQTVAAIEK.

This is an uncharacterized protein from Bacillus subtilis (strain 168).